A 1642-amino-acid chain; its full sequence is Cholesterol transporter ABCA5 (1642 aa).

A helical transmembrane segment spans residues 32–52 (SVQEILFPLFFLFWLILISMM). N-linked (GlcNAc...) asparagine glycosylation occurs at Asn-86. The next 6 helical transmembrane spans lie at 220-240 (VILI…AIHI), 264-284 (LSWV…MAVI), 297-317 (IVIF…ALML), 328-348 (GIVE…IILI), 355-375 (LVWL…AQVM), and 396-416 (LIIT…LAVY). An N-linked (GlcNAc...) asparagine glycan is attached at Asn-458. An ABC transporter 1 domain is found at 478–713 (IRISGIQKTY…WGIGYRLSMY (236 aa)). An ATP-binding site is contributed by 514–521 (GHSGTGKS). 2 helical membrane passes run 866–886 (LLLL…HHSF) and 967–987 (VFAA…VNII). A glycan (N-linked (GlcNAc...) asparagine) is linked at Asn-996. The next 6 membrane-spanning stretches (helical) occupy residues 1021–1041 (LYFQ…YFAM), 1071–1091 (VVDI…LLAF), 1102–1122 (FLAV…FTYI), 1139–1159 (FIYS…FFMG), 1169–1189 (AFCI…FIKI), and 1207–1227 (LSVA…LLQY). Residues 1249 to 1268 (KSKNRKLPEPPDNEDEDEDV) are disordered. Residues 1259 to 1268 (PDNEDEDEDV) show a composition bias toward acidic residues. Residues 1290 to 1533 (IMVSNLHKEY…FGKGYFLEIK (244 aa)) form the ABC transporter 2 domain. 1333 to 1340 (GPNGAGKS) contacts ATP.

This sequence belongs to the ABC transporter superfamily. ABCA family. Post-translationally, N-glycosylated. Ubiquitously expressed. Highly expressed in testis, skeletal muscle, kidney, liver and placenta. Expressed in both the epithelial and mesenchymal compartments, present within the outer root sheath (ORS) of the hair follicle as well as dermal sheath. Expressed in multiple regions of the brain, including the hippocampus, superior frontal and inferior temporal cortices. Strongly expressed in neurons and moderately in microglia, with only weak expression in astrocytes and oligodendrocytes.

It is found in the golgi apparatus membrane. Its subcellular location is the lysosome membrane. The protein resides in the late endosome membrane. It localises to the cell membrane. The enzyme catalyses cholesterol(in) + ATP + H2O = cholesterol(out) + ADP + phosphate + H(+). In terms of biological role, cholesterol efflux transporter in macrophages that is responsible for APOAI/high-density lipoproteins (HDL) formation at the plasma membrane under high cholesterol levels and participates in reverse cholesterol transport. May play a role in the processing of autolysosomes. The chain is Cholesterol transporter ABCA5 from Homo sapiens (Human).